The chain runs to 204 residues: ATP-dependent Clp protease proteolytic subunit (204 aa).

Serine 101 serves as the catalytic Nucleophile. Histidine 126 is an active-site residue.

This sequence belongs to the peptidase S14 family. In terms of assembly, component of the chloroplastic Clp protease core complex.

The protein localises to the plastid. Its subcellular location is the chloroplast stroma. It catalyses the reaction Hydrolysis of proteins to small peptides in the presence of ATP and magnesium. alpha-casein is the usual test substrate. In the absence of ATP, only oligopeptides shorter than five residues are hydrolyzed (such as succinyl-Leu-Tyr-|-NHMec, and Leu-Tyr-Leu-|-Tyr-Trp, in which cleavage of the -Tyr-|-Leu- and -Tyr-|-Trp bonds also occurs).. Cleaves peptides in various proteins in a process that requires ATP hydrolysis. Has a chymotrypsin-like activity. Plays a major role in the degradation of misfolded proteins. The chain is ATP-dependent Clp protease proteolytic subunit from Anthoceros angustus (Hornwort).